A 714-amino-acid chain; its full sequence is Pre-mRNA-splicing factor CLF1 (714 aa).

HAT repeat units lie at residues 48 to 80 (SFQL…WEVK), 83 to 115 (HDFP…FELS), 117 to 149 (KNIT…TEET), 151 to 182 (KNYQ…YEKR), 184 to 215 (DEYD…FEMN), 265 to 305 (KEYE…FEKS), 315 to 347 (SIMI…ILQQ), 349 to 384 (DNNE…IWVK), 394 to 430 (GSIE…FEIR), 435 to 470 (NGLA…LEQK), 472 to 510 (GEWD…FEKN), and 555 to 586 (MRYA…FESS).

This sequence belongs to the crooked-neck family. As to quaternary structure, associated with the spliceosome.

It localises to the nucleus. In terms of biological role, involved in pre-mRNA splicing and cell cycle progression. Required for the spliceosome assembly and initiation of the DNA replication. This is Pre-mRNA-splicing factor CLF1 (CLF1) from Debaryomyces hansenii (strain ATCC 36239 / CBS 767 / BCRC 21394 / JCM 1990 / NBRC 0083 / IGC 2968) (Yeast).